Here is a 1830-residue protein sequence, read N- to C-terminus: Urea amidolyase (1830 aa).

Residues 115-122 (GAIVIGKT), K740, E823, and N858 each bind ATP. The Biotin carboxylation domain maps to 625-1068 (PFETVLIANR…ATKILDSYDY (444 aa)). Residues 744–941 (REIAEKAGVP…LVEWMLRIAA (198 aa)) form the ATP-grasp domain. In terms of domain architecture, Biotinyl-binding spans 1752 to 1830 (AVEEEYPEDA…DAGDLVAVIQ (79 aa)). K1796 is subject to N6-biotinyllysine.

This sequence belongs to the DUR1,2 family. Monomer. It depends on biotin as a cofactor.

The catalysed reaction is urea + hydrogencarbonate + ATP = urea-1-carboxylate + ADP + phosphate + H(+). The enzyme catalyses urea-1-carboxylate + H2O + 3 H(+) = 2 NH4(+) + 2 CO2. It functions in the pathway nitrogen metabolism; urea degradation; CO(2) and NH(3) from urea (allophanate route): step 1/2. The protein operates within nitrogen metabolism; urea degradation; CO(2) and NH(3) from urea (allophanate route): step 2/2. In terms of biological role, involved in uracil catabolism. Hydrolysis of urea to ammonia and CO(2). The protein is Urea amidolyase (DUR1,2) of Lachancea kluyveri (Yeast).